A 429-amino-acid chain; its full sequence is Gap junction gamma-2 protein (429 aa).

Topologically, residues 1 to 25 are cytoplasmic; it reads MTNMSWSFLTRLLEEIHNHSTFVGK. The chain crosses the membrane as a helical span at residues 26 to 46; that stretch reads VWLTVLVVFRIVLTAVGGESI. Residues 47-78 are Extracellular-facing; sequence YSDEQTKFTCNTRQPGCDNVCYDAFAPLSHVR. A helical membrane pass occupies residues 79–99; sequence FWVFQIVVISTPSVMYLGYAV. Residues 100–214 lie on the Cytoplasmic side of the membrane; that stretch reads HRLARASQDE…EGLMRVYVAQ (115 aa). The interval 106–200 is disordered; it reads SQDERRRASR…GPAGQHDGRR (95 aa). Basic residues predominate over residues 112–123; the sequence is RASRRRPSRRAP. Residues 124-138 show a composition bias toward pro residues; it reads RPPLPLPPPPHPGWP. Residues 142–173 are compositionally biased toward acidic residues; sequence DLGEEEPMLGLGEEDEDPGVAEGLGEDEEAED. A helical transmembrane segment spans residues 215-235; it reads LVARAAFEVAFLVGQYLLYGF. The Extracellular segment spans residues 236 to 263; sequence EVRPFFACSRQPCPHVVDCFVSRPTEKT. The helical transmembrane segment at 264–284 threads the bilayer; sequence VFLLVMYVVSCLCLLLNLCEM. At 285–429 the chain is on the cytoplasmic side; it reads AHLGLGNAQD…SREGKTTVWI (145 aa). Disordered regions lie at residues 296–316 and 361–429; these read VRGRRPLPASPGPMPRPPPCA and LGDL…TVWI. Positions 303–316 are enriched in pro residues; sequence PASPGPMPRPPPCA. Residue Ser366 is modified to Phosphoserine. Residues 372 to 395 show a composition bias toward low complexity; it reads LPANARGPPKPGAPASGSGSATSG.

Belongs to the connexin family. Gamma-type subfamily. In terms of assembly, a connexon is composed of a hexamer of connexins. Interacts with TJP1.

The protein resides in the cell membrane. The protein localises to the cell junction. It is found in the gap junction. In terms of biological role, one gap junction consists of a cluster of closely packed pairs of transmembrane channels, the connexons, through which materials of low MW diffuse from one cell to a neighboring cell. May play a role in myelination in central and peripheral nervous systems. The polypeptide is Gap junction gamma-2 protein (GJC2) (Bos taurus (Bovine)).